Consider the following 151-residue polypeptide: Shadow of prion protein (151 aa).

The signal sequence occupies residues 1–24 (MNWAPATCWALLLAAAFLCDSGAA). The interval 89-113 (WRRAAGPGERGLEDEEDGVPGGNGT) is disordered. Asn111 carries N-linked (GlcNAc...) asparagine glycosylation. Gly126 carries GPI-anchor amidated glycine lipidation. A propeptide spans 127 to 151 (AGPTRGPRLCLVLGGALGALGLLRP) (removed in mature form).

The protein belongs to the SPRN family. Post-translationally, N-glycosylated. As to expression, mainly expressed in brain. In brain, it is expressed in hippocampus.

The protein resides in the cell membrane. Prion-like protein that has PrP(C)-like neuroprotective activity. May act as a modulator for the biological actions of normal and abnormal PrP. The polypeptide is Shadow of prion protein (SPRN) (Homo sapiens (Human)).